The primary structure comprises 228 residues: MAKQALQVAIDGPASAGKSTVAKLVAKRFGYIYVDTGAMYRAVTYWAMQQHVDLADEAAVITAMKSLKISFKPGEPDQLVFANQEDITAAIRQPDVTNNVSTIAALPQVRTILTEQQREMANAGGIVMDGRDIGTTVLPNAEVKIFLVASAAERAKRRYAENVKKGIDTPLAQLQAEIELRDHKDSTRKVSPLTQATDATLVDTTPMSIDEVVAAIAKIITKKQSSTI.

Residue 12–20 (GPASAGKST) participates in ATP binding.

This sequence belongs to the cytidylate kinase family. Type 1 subfamily.

The protein resides in the cytoplasm. The catalysed reaction is CMP + ATP = CDP + ADP. It catalyses the reaction dCMP + ATP = dCDP + ADP. This is Cytidylate kinase from Lactiplantibacillus plantarum (strain ATCC BAA-793 / NCIMB 8826 / WCFS1) (Lactobacillus plantarum).